The sequence spans 201 residues: 5'(3')-deoxyribonucleotidase, cytosolic type (201 aa).

Asp-10 (nucleophile) is an active-site residue. Residues Asp-10 and Asp-12 each contribute to the Mg(2+) site. The Proton donor role is filled by Asp-12. Positions 18, 44, 65, 99, and 134 each coordinate substrate. Residue Asp-145 coordinates Mg(2+). Ser-182 is modified (phosphoserine).

The protein belongs to the 5'(3')-deoxyribonucleotidase family. In terms of assembly, homodimer. Mg(2+) is required as a cofactor. As to expression, detected in skeletal muscle, heart and pancreas.

The protein localises to the cytoplasm. Its function is as follows. Dephosphorylates the 5' and 2'(3')-phosphates of deoxyribonucleotides, with a preference for dUMP and dTMP, intermediate activity towards dGMP, and low activity towards dCMP and dAMP. This Homo sapiens (Human) protein is 5'(3')-deoxyribonucleotidase, cytosolic type (NT5C).